We begin with the raw amino-acid sequence, 303 residues long: CDAN1-interacting nuclease 1 (303 aa).

Its subcellular location is the nucleus. The protein resides in the cytoplasm. In terms of biological role, may play a role in erythroid cell differentiation. This Xenopus tropicalis (Western clawed frog) protein is CDAN1-interacting nuclease 1 (cdin1).